The following is a 415-amino-acid chain: Histidine--tRNA ligase (415 aa).

This sequence belongs to the class-II aminoacyl-tRNA synthetase family. In terms of assembly, homodimer.

The protein localises to the cytoplasm. The catalysed reaction is tRNA(His) + L-histidine + ATP = L-histidyl-tRNA(His) + AMP + diphosphate + H(+). The protein is Histidine--tRNA ligase of Rickettsia canadensis (strain McKiel).